A 477-amino-acid polypeptide reads, in one-letter code: Putative WAS protein family homolog 4 (477 aa).

A WHD1 region spans residues 1 to 180; that stretch reads MSGVMCLKAS…EGLGGLPSNI (180 aa). Disordered stretches follow at residues 310–420 and 434–477; these read QDGV…QGGH and KGIS…DWES. The span at 315 to 327 shows a compositional bias: pro residues; that stretch reads TPPPPPPPPPPAP. The tract at residues 362–477 is VCA; sequence QGAPREVVDP…QAEDEDDWES (116 aa). The 23-residue stretch at 374-396 folds into the WH2 domain; it reads GWATLLESIRQAGGIGKAKLRSM. Basic and acidic residues predominate over residues 395–411; the sequence is SMKERKLEKQQQKEQEQ. The segment covering 437–449 has biased composition (gly residues); it reads SGKGPGAGDGPGG.

The protein belongs to the WASH1 family. Interacts (via WHD1 region) with WASHC2C; the interaction is direct.

It is found in the early endosome membrane. Its subcellular location is the recycling endosome membrane. Functionally, may act as a nucleation-promoting factor at the surface of endosomes, where it recruits and activates the Arp2/3 complex to induce actin polymerization, playing a key role in the fission of tubules that serve as transport intermediates during endosome sorting. This Homo sapiens (Human) protein is Putative WAS protein family homolog 4 (WASH4P).